We begin with the raw amino-acid sequence, 126 residues long: Flagellar assembly factor FliW (126 aa).

This sequence belongs to the FliW family. In terms of assembly, interacts with translational regulator CsrA and flagellin(s).

Its subcellular location is the cytoplasm. Acts as an anti-CsrA protein, binds CsrA and prevents it from repressing translation of its target genes, one of which is flagellin. Binds to flagellin and participates in the assembly of the flagellum. This chain is Flagellar assembly factor FliW, found in Sulfurimonas denitrificans (strain ATCC 33889 / DSM 1251) (Thiomicrospira denitrificans (strain ATCC 33889 / DSM 1251)).